Here is a 1151-residue protein sequence, read N- to C-terminus: UDP-N-acetylglucosamine--peptide N-acetylglucosaminyltransferase (1151 aa).

12 TPR repeats span residues 125–158 (LKKVTELAHRQFQSGNYVEAEKYCNLVFQSDPNN), 193–226 (AEAYSNLGNYYKEKGQLQDALENYKLAVKLKPEF), 227–260 (IDAYINLAAALVSGGDLEQAVTAYFNALQINPDL), 261–294 (YCVRSDLGNLLKAMGRLEEAKVCYLKAIETQPQF), 295–328 (AVAWSNLGCVFNSQGEIWLAIHHFEKAVTLDPNF), 329–362 (LDAYINLGNVLKEARIFDRAVSAYLRALNLSGNH), 363–396 (AVVHGNLACVYYEQGLIDLAIDTYKKAIDLQPHF), 397–430 (PDAYCNLANALKEKGSVVEAEQMYMKALELCPTH), 431–464 (ADSQNNLANIKREQGKIEDATRLYLKALEIYPEF), 465–498 (AAAHSNLASILQQQGKLNDAILHYKEAIRIAPTF), 499–532 (ADAYSNMGNTLKEMGDSSAAIACYNRAIQINPAF), and 533–566 (ADAHSNLASIHKDAGNMAEAIQSYSTALKLKPDF). The stretch at 567–577 (PDAYCNLAHCH) is one TPR 13; truncated repeat. Residues 591–607 (RKLVQIVEDQLCKKRLP) carry the Nuclear localization signal motif. The Proton acceptor role is filled by H612. Residues Q954, K957, 1010-1013 (VAAK), 1016-1019 (HVRR), 1034-1036 (GHT), and D1040 contribute to the UDP site.

Belongs to the glycosyltransferase 41 family. O-GlcNAc transferase subfamily.

It is found in the nucleus. It localises to the cytoplasm. Its subcellular location is the perinuclear region. It catalyses the reaction L-seryl-[protein] + UDP-N-acetyl-alpha-D-glucosamine = 3-O-(N-acetyl-beta-D-glucosaminyl)-L-seryl-[protein] + UDP + H(+). The catalysed reaction is L-threonyl-[protein] + UDP-N-acetyl-alpha-D-glucosamine = 3-O-(N-acetyl-beta-D-glucosaminyl)-L-threonyl-[protein] + UDP + H(+). The protein operates within protein modification; protein glycosylation. Its function is as follows. Addition of nucleotide-activated sugars directly onto the polypeptide through O-glycosidic linkage with the hydroxyl of serine or threonine. Influences tap habituation in the mechanosensory neurons cell autonomously. This chain is UDP-N-acetylglucosamine--peptide N-acetylglucosaminyltransferase (ogt-1), found in Caenorhabditis elegans.